The sequence spans 833 residues: Toll-like receptor 4 (833 aa).

Residues 1-23 (MMPPTRLAGTLIPAMAFLSCLRP) form the signal peptide. An LRRNT domain is found at 24–54 (ESWDPCVEVVPNITYQCMDLNLHKIPDNIPS). Over 24 to 632 (ESWDPCVEVV…FRNATCQVRK (609 aa)) the chain is Extracellular. A disulfide bridge connects residues cysteine 29 and cysteine 40. N-linked (GlcNAc...) asparagine glycosylation is present at asparagine 35. LRR repeat units lie at residues 55–76 (STKD…SFSN), 79–100 (ELQV…AYQG), 103–124 (HLSI…AFSG), 127–148 (SLQT…PIGH), and 151–172 (TLKE…EYFS). The N-linked (GlcNAc...) asparagine glycan is linked to asparagine 173. 3 LRR repeats span residues 176–197 (NLEY…DLQV), 205–225 (NLSL…AFKE), and 227–236 (KLRELTLRSN). Residue asparagine 205 is glycosylated (N-linked (GlcNAc...) asparagine). Residue asparagine 238 is glycosylated (N-linked (GlcNAc...) asparagine). An intrachain disulfide couples cysteine 281 to cysteine 306. A glycan (N-linked (GlcNAc...) asparagine) is linked at asparagine 309. 9 LRR repeats span residues 352 to 373 (PLKE…VKLE), 374 to 394 (SLEF…CSER), 400 to 420 (RLKH…NFLG), 423 to 444 (QLEY…SVFL), 448 to 456 (NLRYLDISY), 472 to 495 (SLQI…FMEL), 497 to 518 (NLTI…AFNS), 521 to 542 (KLQL…PYEP), and 545 to 565 (SLQT…QELR). Cysteine 390 and cysteine 391 are oxidised to a cystine. N-linked (GlcNAc...) asparagine glycans are attached at residues asparagine 497 and asparagine 526. N-linked (GlcNAc...) asparagine glycans are attached at residues asparagine 570 and asparagine 575. An LRRCT domain is found at 579–630 (NDFACVCEHQSFLQWVKDQRQLLVEVEQMVCAKPLDMQGMPMLNFRNATCQV). 2 cysteine pairs are disulfide-bonded: cysteine 583-cysteine 609 and cysteine 585-cysteine 628. Asparagine 625 is a glycosylation site (N-linked (GlcNAc...) asparagine). Residues 633-653 (TIITGSVFTVLLVFLVVVLVY) form a helical membrane-spanning segment. Residues 654–833 (KFYFHLMLLA…PEGMADAEGS (180 aa)) are Cytoplasmic-facing. Residues 673–816 (STYDAFVIYS…IFWRRLRKAL (144 aa)) form the TIR domain.

This sequence belongs to the Toll-like receptor family. Belongs to the lipopolysaccharide (LPS) receptor, a multi-protein complex containing at least CD14, LY96 and TLR4. Binding to bacterial LPS leads to homodimerization. Interacts with LY96 via the extracellular domain. Interacts with MYD88 and TIRAP via their respective TIR domains. Interacts with TICAM2. Interacts with NOX4. Interacts with CNPY3 and HSP90B1; this interaction is required for proper folding in the endoplasmic reticulum. Interacts with MAP3K21; this interaction leads to negative regulation of TLR4 signaling. Interacts with CD36, following CD36 stimulation by oxLDL or amyloid-beta 42, and forms a heterodimer with TLR6. The trimeric complex is internalized and triggers inflammatory response. LYN kinase activity facilitates TLR4-TLR6 heterodimerization and signal initiation. Interacts with TICAM1 in response to LPS in a WDFY1-dependent manner. Interacts with WDFY1 in response to LPS. Interacts with SMPDL3B. Interacts with CEACAM1; upon lipopolysaccharide stimulation, forms a complex including TLR4 and the phosphorylated form of SYK and CEACAM1, which in turn, recruits PTPN6 that dephosphorylates SYK, reducing the production of reactive oxygen species (ROS) and lysosome disruption, which in turn, reduces the activity of the inflammasome. Interacts with RFTN1; the interaction occurs in response to lipopolysaccharide stimulation. Interacts with SCIMP; the interaction occurs in response to lipopolysaccharide stimulation and is enhanced by phosphorylation of SCIMP by LYN. This interaction facilitates the phosphorylation of TLR4 by LYN which elicits a selective cytokine response in macrophages. Interacts with TRAF3IP3. Interacts with TREM1; this interaction enhances TLR4-mediated inflammatory response. Interacts with ZG16B/PAUF. Interacts with CD82; this interaction inhibits TLR4-mediated signaling pathway. Phosphorylated on tyrosine residues by LYN after binding lipopolysaccharide. In terms of processing, ubiquitinated by RNF128 via 'Lys-28'-linked polyubiquitin chains, leading to proteasomal degradation.

It localises to the cell membrane. The protein resides in the early endosome. Its subcellular location is the cell projection. The protein localises to the ruffle. Transmembrane receptor that functions as a pattern recognition receptor recognizing pathogen- and damage-associated molecular patterns (PAMPs and DAMPs) to induce innate immune responses via downstream signaling pathways. At the plasma membrane, cooperates with LY96 to mediate the innate immune response to bacterial lipopolysaccharide (LPS). Also involved in LPS-independent inflammatory responses triggered by free fatty acids, such as palmitate, and Ni(2+). Mechanistically, acts via MYD88, TIRAP and TRAF6, leading to NF-kappa-B activation, cytokine secretion and the inflammatory response. Alternatively, CD14-mediated TLR4 internalization via endocytosis is associated with the initiation of a MYD88-independent signaling via the TICAM1-TBK1-IRF3 axis leading to type I interferon production. In addition to the secretion of proinflammatory cytokines, initiates the activation of NLRP3 inflammasome and formation of a positive feedback loop between autophagy and NF-kappa-B signaling cascade. In complex with TLR6, promotes inflammation in monocytes/macrophages by associating with TLR6 and the receptor CD86. Upon ligand binding, such as oxLDL or amyloid-beta 42, the TLR4:TLR6 complex is internalized and triggers inflammatory response, leading to NF-kappa-B-dependent production of CXCL1, CXCL2 and CCL9 cytokines, via MYD88 signaling pathway, and CCL5 cytokine, via TICAM1 signaling pathway. In myeloid dendritic cells, vesicular stomatitis virus glycoprotein G but not LPS promotes the activation of IRF7, leading to type I IFN production in a CD14-dependent manner. The chain is Toll-like receptor 4 (TLR4) from Felis catus (Cat).